A 458-amino-acid chain; its full sequence is Sphingomyelinase DDB_G0288017 (458 aa).

The tract at residues 91–111 (NKKAKSPPPPSSLKQQNLHNN) is disordered. Glu135 is a binding site for Mg(2+). His447 functions as the Proton acceptor in the catalytic mechanism.

It belongs to the neutral sphingomyelinase family. It depends on Mg(2+) as a cofactor.

It catalyses the reaction a sphingomyelin + H2O = phosphocholine + an N-acylsphing-4-enine + H(+). Its pathway is lipid metabolism; sphingolipid metabolism. Catalyzes the hydrolysis of sphingomyelin to form ceramide and phosphocholine. The protein is Sphingomyelinase DDB_G0288017 of Dictyostelium discoideum (Social amoeba).